Here is a 302-residue protein sequence, read N- to C-terminus: Protein ECM11 (302 aa).

Disordered regions lie at residues 1 to 67 and 162 to 187; these read MTVI…TDKQ and SLNG…GSYQ. The span at 35–46 shows a compositional bias: polar residues; the sequence is NKPPSSINSRSG. The span at 56–67 shows a compositional bias: basic and acidic residues; that stretch reads APEKKINNTDKQ. The span at 162–171 shows a compositional bias: polar residues; that stretch reads SLNGENTSSP.

In terms of assembly, interacts with CDC6.

The protein localises to the nucleus. May be involved in cell wall organization and biogenesis. The sequence is that of Protein ECM11 (ECM11) from Saccharomyces cerevisiae (strain ATCC 204508 / S288c) (Baker's yeast).